An 81-amino-acid chain; its full sequence is Photosystem I iron-sulfur center (81 aa).

4Fe-4S ferredoxin-type domains follow at residues 2 to 31 (AHSV…MVPW) and 39 to 68 (IASA…VRVY). [4Fe-4S] cluster is bound by residues Cys-11, Cys-14, Cys-17, Cys-21, Cys-48, Cys-51, Cys-54, and Cys-58.

As to quaternary structure, the eukaryotic PSI reaction center is composed of at least 11 subunits. [4Fe-4S] cluster is required as a cofactor.

It is found in the plastid. The protein localises to the chloroplast thylakoid membrane. The catalysed reaction is reduced [plastocyanin] + hnu + oxidized [2Fe-2S]-[ferredoxin] = oxidized [plastocyanin] + reduced [2Fe-2S]-[ferredoxin]. In terms of biological role, apoprotein for the two 4Fe-4S centers FA and FB of photosystem I (PSI); essential for photochemical activity. FB is the terminal electron acceptor of PSI, donating electrons to ferredoxin. The C-terminus interacts with PsaA/B/D and helps assemble the protein into the PSI complex. Required for binding of PsaD and PsaE to PSI. PSI is a plastocyanin/cytochrome c6-ferredoxin oxidoreductase, converting photonic excitation into a charge separation, which transfers an electron from the donor P700 chlorophyll pair to the spectroscopically characterized acceptors A0, A1, FX, FA and FB in turn. The polypeptide is Photosystem I iron-sulfur center (Gracilaria tenuistipitata var. liui (Red alga)).